The following is a 342-amino-acid chain: Cystein proteinase inhibitor protein salarin (342 aa).

The N-terminal stretch at 1-19 (MKSLVLLLLVAVTVSSVVS) is a signal peptide. N-linked (GlcNAc) asparagine glycosylation is present at N153. A glycan (O-linked (GlcNAc) threonine) is linked at T184.

In terms of processing, N-glycosylated, with sialylated biantennary complex-type glycans. O-glycosylated, with sialylated oligosaccharides.

It is found in the cytoplasm. It localises to the vacuole. Its function is as follows. Inhibits papain and ficin (cysteine proteinases) but not trypsin (a serine proteinase). The sequence is that of Cystein proteinase inhibitor protein salarin (salarin) from Salvelinus alpinus (Arctic char).